The following is a 612-amino-acid chain: Zinc metalloproteinase-disintegrin-like 2a (612 aa).

Positions 1 to 20 (MIQVLLVTICLAVFPYQGSS) are cleaved as a signal peptide. The propeptide occupies 21–189 (IILGSGNVND…KKASQLNLTP (169 aa)). The Peptidase M12B domain occupies 199 to 395 (KYIELVIVAD…NRPPCILNKP (197 aa)). Glutamate 202 is a binding site for Ca(2+). The N-linked (GlcNAc...) asparagine glycan is linked to asparagine 218. Ca(2+) is bound at residue aspartate 286. Cystine bridges form between cysteine 310/cysteine 390, cysteine 350/cysteine 374, and cysteine 352/cysteine 357. Histidine 335 contributes to the Zn(2+) binding site. Residue glutamate 336 is part of the active site. Positions 339 and 345 each coordinate Zn(2+). Ca(2+) contacts are provided by cysteine 390, asparagine 393, valine 405, asparagine 408, phenylalanine 410, glutamate 412, glutamate 415, and aspartate 418. A Disintegrin domain is found at 403-489 (PPVCGNYFVE…DCPTDNFQRN (87 aa)). Cystine bridges form between cysteine 406/cysteine 435, cysteine 417/cysteine 430, cysteine 419/cysteine 425, cysteine 429/cysteine 452, cysteine 443/cysteine 449, cysteine 448/cysteine 474, cysteine 461/cysteine 481, cysteine 468/cysteine 500, cysteine 493/cysteine 505, cysteine 512/cysteine 562, cysteine 527/cysteine 573, cysteine 540/cysteine 550, cysteine 557/cysteine 599, and cysteine 593/cysteine 605. A D/ECD-tripeptide motif is present at residues 467 to 469 (ECD).

It belongs to the venom metalloproteinase (M12B) family. P-III subfamily. The cofactor is Zn(2+). As to expression, expressed by the venom gland.

The protein localises to the secreted. Snake venom metalloproteinase that impairs hemostasis in the envenomed animal. The chain is Zinc metalloproteinase-disintegrin-like 2a from Crotalus adamanteus (Eastern diamondback rattlesnake).